A 320-amino-acid polypeptide reads, in one-letter code: ATP-dependent 6-phosphofructokinase (320 aa).

Position 12 (Gly-12) interacts with ATP. ADP-binding positions include 22–26 (RGVVR) and 55–60 (RYSVSD). Residues 73 to 74 (RF) and 103 to 106 (GDGS) each bind ATP. Asp-104 contributes to the Mg(2+) binding site. 126-128 (TID) contacts substrate. Asp-128 acts as the Proton acceptor in catalysis. Arg-155 contacts ADP. Substrate is bound by residues Arg-163 and 170-172 (MGR). Residues 186–188 (GCE), Lys-212, and 214–216 (KKH) each bind ADP. Residues Glu-223, Arg-244, and 250-253 (HIQR) contribute to the substrate site.

It belongs to the phosphofructokinase type A (PFKA) family. ATP-dependent PFK group I subfamily. Prokaryotic clade 'B1' sub-subfamily. As to quaternary structure, homotetramer. Requires Mg(2+) as cofactor.

It is found in the cytoplasm. The catalysed reaction is beta-D-fructose 6-phosphate + ATP = beta-D-fructose 1,6-bisphosphate + ADP + H(+). The protein operates within carbohydrate degradation; glycolysis; D-glyceraldehyde 3-phosphate and glycerone phosphate from D-glucose: step 3/4. With respect to regulation, allosterically activated by ADP and other diphosphonucleosides, and allosterically inhibited by phosphoenolpyruvate. Its function is as follows. Catalyzes the phosphorylation of D-fructose 6-phosphate to fructose 1,6-bisphosphate by ATP, the first committing step of glycolysis. The protein is ATP-dependent 6-phosphofructokinase of Cronobacter sakazakii (strain ATCC BAA-894) (Enterobacter sakazakii).